We begin with the raw amino-acid sequence, 436 residues long: Histidine--tRNA ligase (436 aa).

It belongs to the class-II aminoacyl-tRNA synthetase family. As to quaternary structure, homodimer.

The protein resides in the cytoplasm. The enzyme catalyses tRNA(His) + L-histidine + ATP = L-histidyl-tRNA(His) + AMP + diphosphate + H(+). In Prochlorococcus marinus (strain MIT 9303), this protein is Histidine--tRNA ligase.